A 142-amino-acid polypeptide reads, in one-letter code: Large ribosomal subunit protein uL13 (142 aa).

It belongs to the universal ribosomal protein uL13 family. As to quaternary structure, part of the 50S ribosomal subunit.

Functionally, this protein is one of the early assembly proteins of the 50S ribosomal subunit, although it is not seen to bind rRNA by itself. It is important during the early stages of 50S assembly. This Shewanella putrefaciens (strain CN-32 / ATCC BAA-453) protein is Large ribosomal subunit protein uL13.